The sequence spans 141 residues: Nucleoside diphosphate kinase (141 aa).

Lys-11, Phe-59, Arg-87, Thr-93, Arg-104, and Asn-114 together coordinate ATP. The active-site Pros-phosphohistidine intermediate is His-117.

Belongs to the NDK family. As to quaternary structure, homotetramer. It depends on Mg(2+) as a cofactor.

It is found in the cytoplasm. The catalysed reaction is a 2'-deoxyribonucleoside 5'-diphosphate + ATP = a 2'-deoxyribonucleoside 5'-triphosphate + ADP. It carries out the reaction a ribonucleoside 5'-diphosphate + ATP = a ribonucleoside 5'-triphosphate + ADP. Major role in the synthesis of nucleoside triphosphates other than ATP. The ATP gamma phosphate is transferred to the NDP beta phosphate via a ping-pong mechanism, using a phosphorylated active-site intermediate. This Xylella fastidiosa (strain 9a5c) protein is Nucleoside diphosphate kinase.